A 910-amino-acid chain; its full sequence is E3 ubiquitin-protein ligase MARCHF6 (910 aa).

Residue methionine 1 is modified to N-acetylmethionine. The segment at 1–62 (MDTAEEDICR…ELCKHRFAFT (62 aa)) adopts an RING-CH-type zinc-finger fold. Residues 1–91 (MDTAEEDICR…LVTSIGTAIR (91 aa)) are Cytoplasmic-facing. Residues cysteine 9, cysteine 12, cysteine 26, cysteine 28, histidine 36, cysteine 39, cysteine 52, and cysteine 55 each contribute to the Zn(2+) site. Residues 92-112 (YWFHYTLVAFAWLGVVPLTAC) traverse the membrane as a helical segment. Over 113 to 142 (RIYKCLFTGSVSSLLTLPLDMLSTENLLAD) the chain is Extracellular. The chain crosses the membrane as a helical span at residues 143-163 (CLQGCFVVTCTLCAFISLVWL). Residues 164-283 (REQIVHGGAP…WERMLGLDGS (120 aa)) lie on the Cytoplasmic side of the membrane. The interval 185–256 (AAGHHQNEAP…AADANNGAQD (72 aa)) is disordered. The segment covering 223 to 248 (DAQDDQAEEEEEDNEEEDDAGVEDAA) has biased composition (acidic residues). A helical transmembrane segment spans residues 284-304 (LVFLEHVFWVVSLNTLFILVF). Over 305–336 (AFCPYHIGHFSLVGLGFEEHVQASHFEGLITT) the chain is Extracellular. Residues 337-357 (IVGYILLAITLIICHGLATLV) form a helical membrane-spanning segment. Residues 358–376 (KFHRSRRLLGVCYIVVKVS) are Cytoplasmic-facing. A helical transmembrane segment spans residues 377–397 (LLVVVEIGVFPLICGWWLDIC). Over 398–421 (SLEMFDATLKDRELSFQSAPGTTM) the chain is Extracellular. A helical transmembrane segment spans residues 422–442 (FLHWLVGMVYVFYFASFILLL). The Cytoplasmic portion of the chain corresponds to 443–480 (REVLRPGVLWFLRNLNDPDFNPVQEMIHLPIYRHLRRF). Residues 481–501 (ILSVIVFGSIVLLMLWLPIRI) traverse the membrane as a helical segment. At 502–519 (IKSVLPNFLPYNVMLYSD) the chain is on the extracellular side. A helical transmembrane segment spans residues 520–540 (APVSELSLELLLLQVVLPALL). Over 541 to 632 (EQGHTRQWLK…YRRPLNFPLR (92 aa)) the chain is Cytoplasmic. Residues 633–653 (IFLLIVFMCITLLIASLICLT) form a helical membrane-spanning segment. Residues 654 to 678 (LPVFAGRWLMSFWTGTAKIHELYTA) are Extracellular-facing. A helical membrane pass occupies residues 679–699 (ACGLYVCWLTIRAVTVMVAWM). At 700-721 (PQGRRVIFQKVKEWSLMIMKTL) the chain is on the cytoplasmic side. Residues 722–742 (IVAVLLAGVVPLLLGLLFELV) traverse the membrane as a helical segment. The Extracellular segment spans residues 743–764 (IVAPLRVPLDQTPLFYPWQDWA). A helical membrane pass occupies residues 765–785 (LGVLHAKIIAAITLMGPQWWL). The Cytoplasmic segment spans residues 786–815 (KTVIEQVYANGIRNIDLHYIVRKLAAPVIS). The chain crosses the membrane as a helical span at residues 816–836 (VLLLSLCVPYVIASGVVPLLG). Residues 837 to 848 (VTAEMQNLVHRR) are Extracellular-facing. The helical transmembrane segment at 849–869 (IYPFLLMVVVLMAILSFQVRQ) threads the bilayer. Over 870 to 910 (FKRLYEHIKNDKYLVGQRLVNYERKSGKQGSSPPPPQSSQE) the chain is Cytoplasmic.

In terms of assembly, interacts with DIO2. Interacts with SQLE. Auto-ubiquitinated, which results in proteasomal degradation. Deubiquitinated by USP19; protecting MARCHF6 from p97-mediated proteasomal degradation. Present in brain (at protein level).

It is found in the endoplasmic reticulum membrane. It catalyses the reaction S-ubiquitinyl-[E2 ubiquitin-conjugating enzyme]-L-cysteine + [acceptor protein]-L-lysine = [E2 ubiquitin-conjugating enzyme]-L-cysteine + N(6)-ubiquitinyl-[acceptor protein]-L-lysine.. It functions in the pathway protein modification; protein ubiquitination. Its function is as follows. Endoplasmic reticulum membrane-associated E3 ubiquitin ligase that plays a critical role in mitigating endoplasmic reticulum stress, the regulation of cholesterol and lipid homeostasis, and ferroptosis. Acts as a pivotal component of both the Ac/N-degron pathway (targeting the N-terminal acetyl group of substrates) and the ER-associated protein degradation-cytosol (ERAD-C) pathway (targeting misfolded substrates). For instance, mediates the degradation of Ac/N-degron-bearing proteins such as the G-protein regulator RGS2 and the lipid droplet protein PLIN2. Suppresses endoplasmic reticulum stress and ferroptosis through cytosolic POMC degradation. Prevents ferroptosis by acting as a NADPH sensor during lipid peroxidation through its C-terminal regulatory region. Facilitates also the degradation of selected endoplasmic reticulum proteins by associating with signal peptide peptidase for the turnover of endogenous tail-anchored proteins. Promotes ubiquitination of DIO2, leading to its degradation. By ubiquitinating and thereby modulating the stability of many proteins of the cholesterol pathway including SQLE, CYP51A1, CYP11A1 and HMGCR, acts as a crucial post-translational regulator of cholesterol synthesis. This chain is E3 ubiquitin-protein ligase MARCHF6, found in Homo sapiens (Human).